Consider the following 311-residue polypeptide: MGKENCTTVAEFILLGLSDVPELRVCLFLLFLLIYGVTLLANLGMIALIQVSSRLHTPMYFFLSHLSSVDFCYSSIIVPKMLANIFNKDKAISFLGCMVQFYLFCTCVVTEVFLLAVMAYDRFVAICNPLLYTVTMSWKVRVELASCCYFCGTVCSLIHLCLALRIPFYRSNVINHFFCDLPPVLSLACSDITVNETLLFLVATLNESVTIMIILTSYLLILTTILKMGSAEGRHKAFSTCASHLTAITVFHGTVLSIYCRPSSGNSGDADKVATVFYTVVIPMLNSVIYSLRNKDVKEALRKVMGSKIHS.

The Extracellular portion of the chain corresponds to M1–V25. N5 is a glycosylation site (N-linked (GlcNAc...) asparagine). Residues C26–I46 traverse the membrane as a helical segment. The Cytoplasmic segment spans residues A47 to R54. Residues L55–S75 traverse the membrane as a helical segment. The Extracellular segment spans residues I76 to V99. The cysteines at positions 97 and 189 are disulfide-linked. A helical transmembrane segment spans residues Q100–Y120. Over D121 to K139 the chain is Cytoplasmic. Residues V140–L160 traverse the membrane as a helical segment. Residues C161–E196 are Extracellular-facing. N195 carries an N-linked (GlcNAc...) asparagine glycan. A helical membrane pass occupies residues T197 to S217. At Y218–A237 the chain is on the cytoplasmic side. A helical transmembrane segment spans residues F238 to I258. Residues Y259–D271 lie on the Extracellular side of the membrane. Residues K272–L292 form a helical membrane-spanning segment. The Cytoplasmic segment spans residues R293 to S311.

Belongs to the G-protein coupled receptor 1 family.

It localises to the cell membrane. In terms of biological role, odorant receptor. The polypeptide is Olfactory receptor 5L1 (OR5L1) (Homo sapiens (Human)).